The following is a 51-amino-acid chain: Large ribosomal subunit protein bL33 (51 aa).

The protein belongs to the bacterial ribosomal protein bL33 family.

The polypeptide is Large ribosomal subunit protein bL33 (Nitrosospira multiformis (strain ATCC 25196 / NCIMB 11849 / C 71)).